The following is a 211-amino-acid chain: Transmembrane protein 247 (211 aa).

2 stretches are compositionally biased toward basic and acidic residues: residues 1–10 and 31–45; these read MAMEDREVME and PEGK…EVPK. The disordered stretch occupies residues 1 to 90; the sequence is MAMEDREVME…AGDGPGLESV (90 aa). Residues 63-73 show a composition bias toward pro residues; sequence PGPPRSLPPKS. Positions 119 to 148 form a coiled coil; sequence KYLHQENERQRQHEEVMEQLQQQQQQQQAL. Transmembrane regions (helical) follow at residues 159–179 and 186–206; these read LLLP…IHII and VFFL…LCLI.

The protein localises to the membrane. The protein is Transmembrane protein 247 (Tmem247) of Mus musculus (Mouse).